A 240-amino-acid chain; its full sequence is DNA repair protein RecO (240 aa).

It belongs to the RecO family.

Functionally, involved in DNA repair and RecF pathway recombination. The sequence is that of DNA repair protein RecO from Actinobacillus pleuropneumoniae serotype 7 (strain AP76).